A 281-amino-acid polypeptide reads, in one-letter code: Digeranylgeranylglyceryl phosphate synthase (281 aa).

8 helical membrane passes run 7–27 (ILRPVNAVMAVITVMLMALIT), 32–52 (FSVLLASVVVFTATGAGNVIN), 72–91 (GRISRGVAGVYSIILFALAS), 95–117 (FYLGLLPGLVVVSSSLLMVYYAW), 128–148 (ITISFLTGLSFVFGGIVLGEV), 193–213 (ISGVLAASFMLIASLTSPSLY), 214–234 (LLGIFSALYIPVLLLAVAVFL), and 258–278 (VGMALTFIAFAAGSGTITALT).

It belongs to the UbiA prenyltransferase family. DGGGP synthase subfamily. Requires Mg(2+) as cofactor.

It localises to the cell membrane. The enzyme catalyses sn-3-O-(geranylgeranyl)glycerol 1-phosphate + (2E,6E,10E)-geranylgeranyl diphosphate = 2,3-bis-O-(geranylgeranyl)-sn-glycerol 1-phosphate + diphosphate. Its pathway is membrane lipid metabolism; glycerophospholipid metabolism. In terms of biological role, prenyltransferase that catalyzes the transfer of the geranylgeranyl moiety of geranylgeranyl diphosphate (GGPP) to the C2 hydroxyl of (S)-3-O-geranylgeranylglyceryl phosphate (GGGP). This reaction is the second ether-bond-formation step in the biosynthesis of archaeal membrane lipids. The protein is Digeranylgeranylglyceryl phosphate synthase of Methanothermobacter thermautotrophicus (strain ATCC 29096 / DSM 1053 / JCM 10044 / NBRC 100330 / Delta H) (Methanobacterium thermoautotrophicum).